Reading from the N-terminus, the 426-residue chain is Alpha/beta hydrolase pydG (426 aa).

This sequence belongs to the AB hydrolase superfamily. In terms of assembly, homodimer.

The protein operates within mycotoxin biosynthesis. In terms of biological role, alpha/beta hydrolasee; part of the gene cluster that mediates the biosynthesis of pyrrocidines, fungal natural products containing a macrocyclic para-cyclophane connected to a decahydrofluorene ring system that show potent antibiotic activities toward Gram-negative bacteria. Within the pathway, pydG catalyzes the Knoevenagel condensation that affords the 3-pyrrolin-2-one ring, using as substrate the polyketide-tyrosyl acyl thioester product of pydA. The pathway begins with the PKS-NRPS pydA which, with the help of the trans-enoyl reductase pydC, synthesizes the polyketide-tyrosyl acyl thioester product which can be reductively off-loaded by the terminal reductase (R) domain in pydA. The alpha/beta hydrolase pydG is then required to catalyze the subsequent Knoevenagel condensation that affords the 3-pyrrolin-2-one ring, whereas the four proteins pydB, pydE, pydX and pydZ then function synergistically to form the cyclophane. PydB and the membrane-bound pydX and pydZ are lipid-binding proteins that can sequester and mold the pdyG product into the inverse S-shape. Binding of the medium chain reductase pydE to the complex would trigger the cascade oxidative cyclization. PydY is involved in the Diels-Alder cycloaddition that forms the decahydrofluorene core. Additional non-enzymatic hydroxylation yields pyrrocidine A2 which can be further reduced into pyrrocidine B by an endogenous reductase. In Acremonium sp, this protein is Alpha/beta hydrolase pydG.